Consider the following 250-residue polypeptide: Small ribosomal subunit protein uS2 (250 aa).

This sequence belongs to the universal ribosomal protein uS2 family.

The sequence is that of Small ribosomal subunit protein uS2 from Acidovorax ebreus (strain TPSY) (Diaphorobacter sp. (strain TPSY)).